Here is a 344-residue protein sequence, read N- to C-terminus: tRNA N6-adenosine threonylcarbamoyltransferase (344 aa).

Histidine 111 and histidine 115 together coordinate Fe cation. Residues 133–137 (LVSGG), aspartate 166, glycine 179, and asparagine 283 each bind substrate. Position 311 (aspartate 311) interacts with Fe cation.

This sequence belongs to the KAE1 / TsaD family. The cofactor is Fe(2+).

The protein resides in the cytoplasm. It carries out the reaction L-threonylcarbamoyladenylate + adenosine(37) in tRNA = N(6)-L-threonylcarbamoyladenosine(37) in tRNA + AMP + H(+). Its function is as follows. Required for the formation of a threonylcarbamoyl group on adenosine at position 37 (t(6)A37) in tRNAs that read codons beginning with adenine. Is involved in the transfer of the threonylcarbamoyl moiety of threonylcarbamoyl-AMP (TC-AMP) to the N6 group of A37, together with TsaE and TsaB. TsaD likely plays a direct catalytic role in this reaction. This Orientia tsutsugamushi (strain Ikeda) (Rickettsia tsutsugamushi) protein is tRNA N6-adenosine threonylcarbamoyltransferase.